The primary structure comprises 591 residues: DEAD-box ATP-dependent RNA helicase 35 (591 aa).

The Q motif motif lies at 146-174 (KNFKDMKFPRPVLDTLKEKGIVQPTPIQV). Residues 177 to 361 (LPVILAGRDM…RSALVKPVTV (185 aa)) form the Helicase ATP-binding domain. 190–197 (AFTGSGKT) lines the ATP pocket. A DEAD box motif is present at residues 309–312 (DEAD). The region spanning 372–532 (DVIQEVEYVK…RIPPVLAELN (161 aa)) is the Helicase C-terminal domain. The CCHC-type zinc-finger motif lies at 548 to 565 (KGCAYCGGLGHRIRDCPK).

Belongs to the DEAD box helicase family. DDX41 subfamily.

The enzyme catalyses ATP + H2O = ADP + phosphate + H(+). This is DEAD-box ATP-dependent RNA helicase 35 (RH35) from Arabidopsis thaliana (Mouse-ear cress).